A 591-amino-acid chain; its full sequence is Monoterpene synthase 8, chloroplastic (591 aa).

A chloroplast-targeting transit peptide spans 1–46 (MSLLLAPPSYFPFRGLRRSTAAKQPPCLRLVKCTADRQSPEAARRS). Residues D346, D350, and E497 each coordinate Mg(2+). The DDXXD motif motif lies at 346–350 (DDVYD).

Belongs to the terpene synthase family. Tpsa subfamily. It depends on Mg(2+) as a cofactor. The cofactor is Mn(2+). As to expression, highly expressed in flowers, petals and sepals, but almost undetectable in vegetative organs.

Its subcellular location is the plastid. It is found in the chloroplast. It carries out the reaction (2E)-geranyl diphosphate + H2O = (R)-linalool + diphosphate. It catalyses the reaction (2E)-geranyl diphosphate + H2O = (S)-linalool + diphosphate. The catalysed reaction is (2E,6E)-farnesyl diphosphate = (S)-beta-bisabolene + diphosphate. The enzyme catalyses (2E,6E)-farnesyl diphosphate = (E,R)-alpha-bisabolene + diphosphate. It carries out the reaction (2E,6E)-farnesyl diphosphate = (E)-beta-farnesene + diphosphate. It catalyses the reaction (2E,6E)-farnesyl diphosphate = beta-sesquiphellandrene + diphosphate. The catalysed reaction is (2E,6E)-farnesyl diphosphate = (1S,5S,6R)-alpha-bergamotene + diphosphate. It functions in the pathway secondary metabolite biosynthesis; terpenoid biosynthesis. Sesquiterpene and monoterpene synthase involved in the biosynthesis of volatile compounds present in floral scent. Mediates the conversion of (2E)-geranyl diphosphate (GPP) into linalool, with trace levels of myrcene, limonene and (Z)-beta-ocimene. Also acts as a sesquiterpene synthase by catalyzing the conversion of farnesyl diphosphate (FPP) to alpha-bergamotene and beta-bisabolene and to minor products including alpha-curcumene, cis-alpha-bisabolene, beta-farnesene and beta-sesquiphellandrene, as well as seven other unidentified sesquiterpenes. The chain is Monoterpene synthase 8, chloroplastic from Hedychium coronarium (White butterfly ginger-lily).